Here is an 812-residue protein sequence, read N- to C-terminus: MLMTTTTTAMSVSLSHDVIIAAAQRAARAIPPLWPLASSVAVNPFLGQASEPLEMAAARLRRASGIAVTMPRHWYAERLQSGEITEDDLRAPLQNAPAALRPPSLSALRHAIAATRPSPQAIPTVAELARDTAAVDWPGIVNERIGHWAAGYFDQGQALWAVGRSGGAYSTWRIIATHDLTPEIAGLAGFARYVADAPANAEDAIVDCVARLGLSQDALDGYFHRLLTTLGGWGQLGRYRLWQAELSGATDACVTDLLAIRMLWEAALLGNGGCALVPGWRTAIAAYAEPVAATSDDVIDSILQEAAERAAQRKLNAVLAAPSPAQVAAGRVKLQMAFCIDVRSEVFRRALESLDSGIQTLGFAGFFGLGIGHRRFASDVVEARLPVLLAPGVITCAGDATASAAASDLSARIAARAKRAWGRFKLAAISSFAFVEATGPIYVAKLLRDGLALARQHAPNEPAPRPADGLDLETRLTMATRILKAMSFTGGFARLVVLAGHGAKVVNNPHASALHCGACGGYSGEVNARLLASLLNDSQVRAGLAARGIVIPADTLFLAALHDTTTDAVTLYTADHPSPGHAEDLAQAAQWLAAAGALARAERAARLPRAHRSQDIAHRARDWAEIRPEWALAGCQAFIAAPRSRTAGRDLAGRAFLHDYDWRYDDGFGVLELILTAPVVVASWISLQYYGSTVAPESFGAGNKLLHNVTGGIGVVEGNGGILRTGLPWQSVHDGQRLTHEPLRLSVLIEAPPEAIANILERHPQVRALFDNRWLHLFALDDEGLIRPGFRRHSRPSLRVAPFKLYRGQVAS.

Zn(2+) contacts are provided by Cys339, Asp341, His501, and Cys516.

It belongs to the inorganic carbon transporter (TC 9.A.2) DabA family. Forms a complex with DabB. Requires Zn(2+) as cofactor.

The protein resides in the cell inner membrane. Part of an energy-coupled inorganic carbon pump. This chain is Probable inorganic carbon transporter subunit DabA, found in Xanthomonas axonopodis pv. citri (strain 306).